The following is a 214-amino-acid chain: Probable transaldolase (214 aa).

The active-site Schiff-base intermediate with substrate is the Lys-83.

The protein belongs to the transaldolase family. Type 3B subfamily.

The protein localises to the cytoplasm. It catalyses the reaction D-sedoheptulose 7-phosphate + D-glyceraldehyde 3-phosphate = D-erythrose 4-phosphate + beta-D-fructose 6-phosphate. The protein operates within carbohydrate degradation; pentose phosphate pathway; D-glyceraldehyde 3-phosphate and beta-D-fructose 6-phosphate from D-ribose 5-phosphate and D-xylulose 5-phosphate (non-oxidative stage): step 2/3. Transaldolase is important for the balance of metabolites in the pentose-phosphate pathway. In Geobacter sp. (strain M21), this protein is Probable transaldolase.